Here is a 477-residue protein sequence, read N- to C-terminus: Bifunctional protein HldE (477 aa).

Positions 1–318 (MKVNLPAFER…ENAVRGRADT (318 aa)) are ribokinase. 195–198 (NLSE) contributes to the ATP binding site. Residue D264 is part of the active site. A cytidylyltransferase region spans residues 344–477 (MTNGVFDILH…IKKIQTESEK (134 aa)).

It in the N-terminal section; belongs to the carbohydrate kinase PfkB family. The protein in the C-terminal section; belongs to the cytidylyltransferase family. In terms of assembly, homodimer.

The enzyme catalyses D-glycero-beta-D-manno-heptose 7-phosphate + ATP = D-glycero-beta-D-manno-heptose 1,7-bisphosphate + ADP + H(+). The catalysed reaction is D-glycero-beta-D-manno-heptose 1-phosphate + ATP + H(+) = ADP-D-glycero-beta-D-manno-heptose + diphosphate. It participates in nucleotide-sugar biosynthesis; ADP-L-glycero-beta-D-manno-heptose biosynthesis; ADP-L-glycero-beta-D-manno-heptose from D-glycero-beta-D-manno-heptose 7-phosphate: step 1/4. The protein operates within nucleotide-sugar biosynthesis; ADP-L-glycero-beta-D-manno-heptose biosynthesis; ADP-L-glycero-beta-D-manno-heptose from D-glycero-beta-D-manno-heptose 7-phosphate: step 3/4. Catalyzes the phosphorylation of D-glycero-D-manno-heptose 7-phosphate at the C-1 position to selectively form D-glycero-beta-D-manno-heptose-1,7-bisphosphate. Its function is as follows. Catalyzes the ADP transfer from ATP to D-glycero-beta-D-manno-heptose 1-phosphate, yielding ADP-D-glycero-beta-D-manno-heptose. In Salmonella dublin (strain CT_02021853), this protein is Bifunctional protein HldE.